Consider the following 198-residue polypeptide: Penicillin-binding protein activator LpoB (198 aa).

An N-terminal signal peptide occupies residues Met-1 to Gly-19. Cys-20 is lipidated: N-palmitoyl cysteine. A lipid anchor (S-diacylglycerol cysteine) is attached at Cys-20. The span at Gln-26–Glu-37 shows a compositional bias: low complexity. The disordered stretch occupies residues Gln-26–Pro-59. Residues Pro-38 to Pro-59 show a composition bias toward pro residues.

It belongs to the LpoB family. Interacts with PBP1b.

Its subcellular location is the cell outer membrane. Its function is as follows. Regulator of peptidoglycan synthesis that is essential for the function of penicillin-binding protein 1B (PBP1b). The chain is Penicillin-binding protein activator LpoB from Pantoea ananatis (strain LMG 20103).